We begin with the raw amino-acid sequence, 277 residues long: 3-methyl-2-oxobutanoate hydroxymethyltransferase (277 aa).

Residues Asp53 and Asp96 each coordinate Mg(2+). 3-methyl-2-oxobutanoate is bound by residues 53–54 (DS), Asp96, and Lys126. Residue Glu128 participates in Mg(2+) binding. Glu195 serves as the catalytic Proton acceptor.

Belongs to the PanB family. As to quaternary structure, homodecamer; pentamer of dimers. The cofactor is Mg(2+).

The protein resides in the cytoplasm. It carries out the reaction 3-methyl-2-oxobutanoate + (6R)-5,10-methylene-5,6,7,8-tetrahydrofolate + H2O = 2-dehydropantoate + (6S)-5,6,7,8-tetrahydrofolate. Its pathway is cofactor biosynthesis; (R)-pantothenate biosynthesis; (R)-pantoate from 3-methyl-2-oxobutanoate: step 1/2. Catalyzes the reversible reaction in which hydroxymethyl group from 5,10-methylenetetrahydrofolate is transferred onto alpha-ketoisovalerate to form ketopantoate. The sequence is that of 3-methyl-2-oxobutanoate hydroxymethyltransferase from Pelodictyon phaeoclathratiforme (strain DSM 5477 / BU-1).